Reading from the N-terminus, the 341-residue chain is ATPase GET3 (341 aa).

Lys-34–Thr-41 contacts ATP. Residue Asp-63 is part of the active site. Glu-245 and Asn-272 together coordinate ATP. The Zn(2+) site is built by Cys-283 and Cys-286.

This sequence belongs to the arsA ATPase family. As to quaternary structure, homodimer.

Its subcellular location is the cytoplasm. It is found in the endoplasmic reticulum. In terms of biological role, ATPase required for the post-translational delivery of tail-anchored (TA) proteins to the endoplasmic reticulum. Recognizes and selectively binds the transmembrane domain of TA proteins in the cytosol. This complex then targets to the endoplasmic reticulum by membrane-bound receptors, where the tail-anchored protein is released for insertion. This process is regulated by ATP binding and hydrolysis. ATP binding drives the homodimer towards the closed dimer state, facilitating recognition of newly synthesized TA membrane proteins. ATP hydrolysis is required for insertion. Subsequently, the homodimer reverts towards the open dimer state, lowering its affinity for the membrane-bound receptor, and returning it to the cytosol to initiate a new round of targeting. This is ATPase GET3 from Ajellomyces capsulatus (strain H143) (Darling's disease fungus).